A 994-amino-acid chain; its full sequence is Phosphoenolpyruvate carboxylase (994 aa).

The disordered stretch occupies residues Met-1 to Pro-67. 2 stretches are compositionally biased toward low complexity: residues Thr-9–Ala-24 and Ala-34–Asn-57. Active-site residues include His-204 and Lys-646.

Belongs to the PEPCase type 1 family. Mg(2+) serves as cofactor.

The enzyme catalyses oxaloacetate + phosphate = phosphoenolpyruvate + hydrogencarbonate. Forms oxaloacetate, a four-carbon dicarboxylic acid source for the tricarboxylic acid cycle. This is Phosphoenolpyruvate carboxylase from Paraburkholderia xenovorans (strain LB400).